The sequence spans 78 residues: Exodeoxyribonuclease 7 small subunit (78 aa).

This sequence belongs to the XseB family. In terms of assembly, heterooligomer composed of large and small subunits.

The protein resides in the cytoplasm. It catalyses the reaction Exonucleolytic cleavage in either 5'- to 3'- or 3'- to 5'-direction to yield nucleoside 5'-phosphates.. Bidirectionally degrades single-stranded DNA into large acid-insoluble oligonucleotides, which are then degraded further into small acid-soluble oligonucleotides. This chain is Exodeoxyribonuclease 7 small subunit, found in Oceanobacillus iheyensis (strain DSM 14371 / CIP 107618 / JCM 11309 / KCTC 3954 / HTE831).